The primary structure comprises 835 residues: Protein P (835 aa).

The tract at residues 1 to 176 (MPLSYQHFRK…FFGTPYTWEH (176 aa)) is terminal protein domain (TP). Residues 177–334 (KLQHGTQPVN…HCLHHIVKLL (158 aa)) form a spacer region. 2 disordered regions span residues 211 to 235 (LGQK…WSRT) and 258 to 288 (RHPS…PTSH). Residues 335–680 (DDWGPCQHHG…YMHLYPVARQ (346 aa)) are polymerase/reverse transcriptase domain (RT). One can recognise a Reverse transcriptase domain in the interval 345–590 (HHFIRIPRTP…KALNFMGYVI (246 aa)). The Mg(2+) site is built by Asp417, Asp541, and Asp542.

This sequence belongs to the hepadnaviridae P protein family.

It catalyses the reaction DNA(n) + a 2'-deoxyribonucleoside 5'-triphosphate = DNA(n+1) + diphosphate. It carries out the reaction Endonucleolytic cleavage to 5'-phosphomonoester.. Activated by host HSP70 and HSP40 in vitro to be able to bind the epsilon loop of the pgRNA. Because deletion of the RNase H region renders the protein partly chaperone-independent, the chaperones may be needed indirectly to relieve occlusion of the RNA-binding site by this domain. Inhibited by several reverse-transcriptase inhibitors: Lamivudine, Adefovir and Entecavir. Functionally, multifunctional enzyme that converts the viral RNA genome into dsDNA in viral cytoplasmic capsids. This enzyme displays a DNA polymerase activity that can copy either DNA or RNA templates, and a ribonuclease H (RNase H) activity that cleaves the RNA strand of RNA-DNA heteroduplexes in a partially processive 3'- to 5'-endonucleasic mode. Neo-synthesized pregenomic RNA (pgRNA) are encapsidated together with the P protein, and reverse-transcribed inside the nucleocapsid. Initiation of reverse-transcription occurs first by binding the epsilon loop on the pgRNA genome, and is initiated by protein priming, thereby the 5'-end of (-)DNA is covalently linked to P protein. Partial (+)DNA is synthesized from the (-)DNA template and generates the relaxed circular DNA (RC-DNA) genome. After budding and infection, the RC-DNA migrates in the nucleus, and is converted into a plasmid-like covalently closed circular DNA (cccDNA). The activity of P protein does not seem to be necessary for cccDNA generation, and is presumably released from (+)DNA by host nuclear DNA repair machinery. In Woolly monkey hepatitis B virus (isolate Louisville) (WMHBV), this protein is Protein P.